Reading from the N-terminus, the 1354-residue chain is Rho-associated protein kinase 1 (1354 aa).

Residue S2 is modified to N-acetylserine. Positions Y76–F338 constitute a Protein kinase domain. ATP contacts are provided by residues I82–V90 and K105. D198 acts as the Proton acceptor in catalysis. Residues D341–A409 enclose the AGC-kinase C-terminal domain. An interaction with FHOD1 region spans residues F368–R727. A coiled-coil region spans residues K422 to K692. The REM-1 domain maps to S479–T556. Positions E707–S946 are SHROOM3 binding. Residues T949–F1015 enclose the RhoBD domain. Residues L998–M1010 form an RHOA binding region. Residues N1011–S1102 adopt a coiled-coil conformation. The interval T1101–R1120 is disordered. 2 positions are modified to phosphoserine: S1105 and S1108. The segment at N1115 to S1354 is auto-inhibitory. A PH domain is found at E1118–P1317. The Phorbol-ester/DAG-type zinc finger occupies G1228 to C1283. A Phosphoserine modification is found at S1328. Positions S1333–S1354 are disordered.

It belongs to the protein kinase superfamily. AGC Ser/Thr protein kinase family. Homodimer. Interacts with RHOA (activated by GTP), RHOB, RHOC, GEM, MYLC2B, RHOE, PPP1R12A, LIMK1, LIMK2, TSG101, CHORDC1, DAPK3, PFN1, PTEN and JIP3. Interacts with FHOD1 in a Src-dependent manner. Interacts with ITGB1BP1 (via N-terminus and PTB domain). Interacts with SHROOM3. It depends on Mg(2+) as a cofactor. In terms of processing, autophosphorylated on serine and threonine residues. Cleaved by caspase-3 during apoptosis. This leads to constitutive activation of the kinase and membrane blebbing. In terms of tissue distribution, detected in corneal epithelium.

It localises to the cytoplasm. Its subcellular location is the cytoskeleton. The protein localises to the microtubule organizing center. It is found in the centrosome. The protein resides in the centriole. It localises to the golgi apparatus membrane. Its subcellular location is the cell projection. The protein localises to the bleb. It is found in the cell membrane. The protein resides in the lamellipodium. It localises to the ruffle. The catalysed reaction is L-seryl-[protein] + ATP = O-phospho-L-seryl-[protein] + ADP + H(+). The enzyme catalyses L-threonyl-[protein] + ATP = O-phospho-L-threonyl-[protein] + ADP + H(+). With respect to regulation, activated by RHOA binding. Inhibited by Y-27632. Functionally, protein kinase which is a key regulator of the actin cytoskeleton and cell polarity. Involved in regulation of smooth muscle contraction, actin cytoskeleton organization, stress fiber and focal adhesion formation, neurite retraction, cell adhesion and motility via phosphorylation of DAPK3, GFAP, LIMK1, LIMK2, MYL9/MLC2, TPPP, PFN1 and PPP1R12A. Phosphorylates FHOD1 and acts synergistically with it to promote SRC-dependent non-apoptotic plasma membrane blebbing. Phosphorylates JIP3 and regulates the recruitment of JNK to JIP3 upon UVB-induced stress. Acts as a suppressor of inflammatory cell migration by regulating PTEN phosphorylation and stability. Acts as a negative regulator of VEGF-induced angiogenic endothelial cell activation. Required for centrosome positioning and centrosome-dependent exit from mitosis. Plays a role in terminal erythroid differentiation. Inhibits podocyte motility via regulation of actin cytoskeletal dynamics and phosphorylation of CFL1. Promotes keratinocyte terminal differentiation. Involved in osteoblast compaction through the fibronectin fibrillogenesis cell-mediated matrix assembly process, essential for osteoblast mineralization. May regulate closure of the eyelids and ventral body wall by inducing the assembly of actomyosin bundles. This chain is Rho-associated protein kinase 1 (ROCK1), found in Oryctolagus cuniculus (Rabbit).